Consider the following 374-residue polypeptide: Relaxin-3 receptor 2 (374 aa).

The Extracellular segment spans residues 1-43 (MPTLNTSASPPTFFWANASGGSVLSADDAPMPVKFLALRLMVA). N5 and N17 each carry an N-linked (GlcNAc...) asparagine glycan. The helical transmembrane segment at 44-64 (LAYGLVGAIGLLGNLAVLWVL) threads the bilayer. Residues 65–78 (SNCARRAPGPPSDT) lie on the Cytoplasmic side of the membrane. The helical transmembrane segment at 79–99 (FVFNLALADLGLALTLPFWAA) threads the bilayer. Over 100–116 (ESALDFHWPFGGALCKM) the chain is Extracellular. Residues C114 and C191 are joined by a disulfide bond. A helical membrane pass occupies residues 117–137 (VLTATVLNVYASIFLITALSV). Topologically, residues 138–154 (ARYWVVAMAAGPGTHLS) are cytoplasmic. The chain crosses the membrane as a helical span at residues 155-175 (LFWARIATLAVWAAAALVTVP). Residues 176-209 (TAVFGVEGEVCGVRLCLLRFPSRYWLGAYQLQRV) lie on the Extracellular side of the membrane. Residues 210–230 (VLAFMVPLGVITTSYLLLLAF) form a helical membrane-spanning segment. Residues 231 to 249 (LQRRQRRRQDSRVVARSVR) lie on the Cytoplasmic side of the membrane. A helical transmembrane segment spans residues 250–270 (ILVASFFLCWFPNHVVTLWGV). Residues 271 to 281 (LVKFDLVPWNS) are Extracellular-facing. Residues 282 to 302 (TFYTIQTYVFPVTTCLAHSNS) traverse the membrane as a helical segment. Topologically, residues 303-374 (CLNPVLYCLL…LTNLDRGTPG (72 aa)) are cytoplasmic.

The protein belongs to the G-protein coupled receptor 1 family. As to expression, expressed in a broader range of tissues including brain, kidney, testis, thymus, placenta, prostate, salivary gland, thyroid and colon.

The protein localises to the cell membrane. High affinity receptor for INSL5. Also acts as a receptor for RLN3/relaxin-3, as well as bradykinin and kallidin. Binding of the ligand inhibit cAMP accumulation. The chain is Relaxin-3 receptor 2 (RXFP4) from Homo sapiens (Human).